Here is a 563-residue protein sequence, read N- to C-terminus: BOS complex subunit NCLN (563 aa).

Residues 1-42 form the signal peptide; the sequence is MLEEAGEVLENMLKASCLPLGFIVFLPAVLLLVAPPLPAADA. The Lumenal portion of the chain corresponds to 43–522; sequence AHEFTVYRMQ…VMNAYRVKPA (480 aa). N-linked (GlcNAc...) asparagine glycans are attached at residues Asn241 and Asn428. The chain crosses the membrane as a helical span at residues 523–543; sequence VFDLLLAVGIAAYLGMAYVAV. Topologically, residues 544–563 are cytoplasmic; the sequence is QHFSLLYKTVQRLLVKAKTQ.

The protein belongs to the nicastrin family. Component of the back of Sec61 (BOS) complex, composed of NCLN/Nicalin, NOMO (NOMO1, NOMO2 or NOMO3) and TMEM147. The BOS complex is part of the multi-pass translocon (MPT) complex, composed of three subcomplexes, the GEL complex (composed of RAB5IF/OPTI and TMCO1), the BOS complex (composed of NCLN/Nicalin, NOMO and TMEM147) and the PAT complex (composed of WDR83OS/Asterix and CCDC47). The MPT complex associates with the SEC61 complex. Highly expressed in pancreas and skeletal muscle and, at lower levels, in heart.

The protein localises to the endoplasmic reticulum membrane. Its function is as follows. Component of the multi-pass translocon (MPT) complex that mediates insertion of multi-pass membrane proteins into the lipid bilayer of membranes. The MPT complex takes over after the SEC61 complex: following membrane insertion of the first few transmembrane segments of proteins by the SEC61 complex, the MPT complex occludes the lateral gate of the SEC61 complex to promote insertion of subsequent transmembrane regions. May antagonize Nodal signaling and subsequent organization of axial structures during mesodermal patterning, via its interaction with NOMO. This is BOS complex subunit NCLN from Homo sapiens (Human).